The sequence spans 444 residues: Putative F-box protein At1g64540 (444 aa).

Residues Arg4–Glu50 form the F-box domain.

The polypeptide is Putative F-box protein At1g64540 (Arabidopsis thaliana (Mouse-ear cress)).